The chain runs to 423 residues: Enolase (423 aa).

Glutamine 165 is a (2R)-2-phosphoglycerate binding site. Residue glutamate 209 is the Proton donor of the active site. Aspartate 244, glutamate 285, and aspartate 310 together coordinate Mg(2+). (2R)-2-phosphoglycerate contacts are provided by lysine 335, arginine 364, serine 365, and lysine 386. Catalysis depends on lysine 335, which acts as the Proton acceptor.

It belongs to the enolase family. In terms of assembly, homooctamer formed by a tetramer of dimers. Mg(2+) is required as a cofactor.

It is found in the cytoplasm. It localises to the secreted. Its subcellular location is the cell surface. It catalyses the reaction (2R)-2-phosphoglycerate = phosphoenolpyruvate + H2O. It functions in the pathway carbohydrate degradation; glycolysis; pyruvate from D-glyceraldehyde 3-phosphate: step 4/5. Its activity is regulated as follows. The covalent binding to the substrate causes inactivation of the enzyme, and possibly serves as a signal for the export of the protein. Catalyzes the reversible conversion of 2-phosphoglycerate (2-PG) into phosphoenolpyruvate (PEP). It is essential for the degradation of carbohydrates via glycolysis. The protein is Enolase of Methanocaldococcus jannaschii (strain ATCC 43067 / DSM 2661 / JAL-1 / JCM 10045 / NBRC 100440) (Methanococcus jannaschii).